We begin with the raw amino-acid sequence, 624 residues long: Carbon monoxide dehydrogenase (624 aa).

Residues Cys37, Cys46, Cys49, Cys54, and Cys65 each contribute to the [4Fe-4S] cluster site. [Ni-4Fe-5S] cluster contacts are provided by His256, Cys292, Cys336, Cys444, Cys475, and Cys516.

Belongs to the Ni-containing carbon monoxide dehydrogenase family. In terms of assembly, homodimer. [4Fe-4S] cluster is required as a cofactor. [Ni-4Fe-5S] cluster serves as cofactor.

The catalysed reaction is CO + 2 oxidized [2Fe-2S]-[ferredoxin] + H2O = 2 reduced [2Fe-2S]-[ferredoxin] + CO2 + 2 H(+). CODH oxidizes carbon monoxide coupled, via CooF, to the reduction of a hydrogen cation by a hydrogenase (possibly CooH). In Methanocaldococcus jannaschii (strain ATCC 43067 / DSM 2661 / JAL-1 / JCM 10045 / NBRC 100440) (Methanococcus jannaschii), this protein is Carbon monoxide dehydrogenase (cooS).